Reading from the N-terminus, the 492-residue chain is Beta-Ala-His dipeptidase (492 aa).

Zn(2+) is bound at residue His-107. The active site involves Asp-109. Residue Asp-140 coordinates Zn(2+). The active-site Proton acceptor is Glu-174. Glu-175 lines the Zn(2+) pocket. Phosphoserine is present on Ser-194. 2 residues coordinate Zn(2+): Asp-203 and His-453.

The protein belongs to the peptidase M20A family. As to quaternary structure, homodimer. Zn(2+) serves as cofactor. As to expression, detected exclusively in kidney.

The protein resides in the secreted. The enzyme catalyses Preferential hydrolysis of the beta-Ala-|-His dipeptide (carnosine), and also anserine, Xaa-|-His dipeptides and other dipeptides including homocarnosine.. It catalyses the reaction carnosine + H2O = beta-alanine + L-histidine. The catalysed reaction is anserine + H2O = N(pros)-methyl-L-histidine + beta-alanine. It carries out the reaction L-alanyl-L-histidine + H2O = L-histidine + L-alanine. The enzyme catalyses glycyl-L-histidine + H2O = L-histidine + glycine. It catalyses the reaction L-homocarnosine + H2O = 4-aminobutanoate + L-histidine. Catalyzes the peptide bond hydrolysis in Xaa-His dipeptides, displaying the highest activity toward carnosine (beta-alanyl-L-histidine) and anserine (beta-alanyl-3-methyl-histidine). This chain is Beta-Ala-His dipeptidase (Cndp1), found in Mus musculus (Mouse).